Consider the following 465-residue polypeptide: UDP-N-acetylmuramate--L-alanine ligase (465 aa).

Position 112-118 (112-118 (GTHGKTT)) interacts with ATP.

It belongs to the MurCDEF family.

The protein localises to the cytoplasm. It carries out the reaction UDP-N-acetyl-alpha-D-muramate + L-alanine + ATP = UDP-N-acetyl-alpha-D-muramoyl-L-alanine + ADP + phosphate + H(+). The protein operates within cell wall biogenesis; peptidoglycan biosynthesis. Functionally, cell wall formation. The chain is UDP-N-acetylmuramate--L-alanine ligase from Burkholderia vietnamiensis (strain G4 / LMG 22486) (Burkholderia cepacia (strain R1808)).